The sequence spans 66 residues: Cell division protein ZapB (66 aa).

Residues 3–59 (LELLSQLETKIQATLENIELLKMELEEEKQKSTQLAEKNQKLQQDLNSWSDKVNGLV) are a coiled coil.

The protein belongs to the ZapB family. In terms of assembly, homodimer. The ends of the coiled-coil dimer bind to each other, forming polymers. Interacts with FtsZ.

It is found in the cytoplasm. Functionally, non-essential, abundant cell division factor that is required for proper Z-ring formation. It is recruited early to the divisome by direct interaction with FtsZ, stimulating Z-ring assembly and thereby promoting cell division earlier in the cell cycle. Its recruitment to the Z-ring requires functional FtsA or ZipA. The chain is Cell division protein ZapB from Shewanella denitrificans (strain OS217 / ATCC BAA-1090 / DSM 15013).